The sequence spans 158 residues: MAESINSLEELGTVAKTEAAAPVHVQKLDAQGRAYATGKRKDAVARVWVKPGTGKITVNDKEFEKYFARPVLQMILQQPIVASNRAGQFDIVATVAGGGLSGQAGAVRHGISKALTYYEPGLRTVLKKGGFLTRDSRVVERKKYGKAKARRSFQFSKR.

It belongs to the universal ribosomal protein uS9 family.

The protein is Small ribosomal subunit protein uS9 of Brucella canis (strain ATCC 23365 / NCTC 10854 / RM-666).